The sequence spans 180 residues: MPLLNSVTTPYAEALLQVVNENDQTEEMVNEVKQLLTLINDAPELEKTLSSPVLETETKRKIIIEIFSDRINSSLLNFLKLLADRQRIGIVTSILNRFLEIHRENSNIALATVTSAVELTDDQKGLITKKIINIAGTEKLELVTKIDPSLIGGFVASVGSKVIDASLASQIRKLGLSLSK.

The protein belongs to the ATPase delta chain family. In terms of assembly, F-type ATPases have 2 components, F(1) - the catalytic core - and F(0) - the membrane proton channel. F(1) has five subunits: alpha(3), beta(3), gamma(1), delta(1), epsilon(1). CF(0) has four main subunits: a(1), b(1), b'(1) and c(10-14). The alpha and beta chains form an alternating ring which encloses part of the gamma chain. F(1) is attached to F(0) by a central stalk formed by the gamma and epsilon chains, while a peripheral stalk is formed by the delta, b and b' chains.

The protein resides in the cellular thylakoid membrane. In terms of biological role, f(1)F(0) ATP synthase produces ATP from ADP in the presence of a proton or sodium gradient. F-type ATPases consist of two structural domains, F(1) containing the extramembraneous catalytic core and F(0) containing the membrane proton channel, linked together by a central stalk and a peripheral stalk. During catalysis, ATP synthesis in the catalytic domain of F(1) is coupled via a rotary mechanism of the central stalk subunits to proton translocation. This protein is part of the stalk that links CF(0) to CF(1). It either transmits conformational changes from CF(0) to CF(1) or is implicated in proton conduction. This is ATP synthase subunit delta from Prochlorococcus marinus (strain MIT 9515).